We begin with the raw amino-acid sequence, 212 residues long: Imidazole glycerol phosphate synthase subunit HisH (212 aa).

Residues 3–212 enclose the Glutamine amidotransferase type-1 domain; sequence TVAVIDYGMG…QNFAAWDGRW (210 aa). The active-site Nucleophile is the cysteine 81. Active-site residues include histidine 190 and glutamate 192.

As to quaternary structure, heterodimer of HisH and HisF.

Its subcellular location is the cytoplasm. It carries out the reaction 5-[(5-phospho-1-deoxy-D-ribulos-1-ylimino)methylamino]-1-(5-phospho-beta-D-ribosyl)imidazole-4-carboxamide + L-glutamine = D-erythro-1-(imidazol-4-yl)glycerol 3-phosphate + 5-amino-1-(5-phospho-beta-D-ribosyl)imidazole-4-carboxamide + L-glutamate + H(+). The enzyme catalyses L-glutamine + H2O = L-glutamate + NH4(+). The protein operates within amino-acid biosynthesis; L-histidine biosynthesis; L-histidine from 5-phospho-alpha-D-ribose 1-diphosphate: step 5/9. Its function is as follows. IGPS catalyzes the conversion of PRFAR and glutamine to IGP, AICAR and glutamate. The HisH subunit catalyzes the hydrolysis of glutamine to glutamate and ammonia as part of the synthesis of IGP and AICAR. The resulting ammonia molecule is channeled to the active site of HisF. The protein is Imidazole glycerol phosphate synthase subunit HisH of Pseudomonas syringae pv. syringae (strain B728a).